The chain runs to 115 residues: UPF0295 protein BLi00901/BL05075 (115 aa).

Helical transmembrane passes span 18–38 (LVFI…SVLL) and 41–61 (VFMI…FWIG).

Belongs to the UPF0295 family.

The protein resides in the cell membrane. The polypeptide is UPF0295 protein BLi00901/BL05075 (Bacillus licheniformis (strain ATCC 14580 / DSM 13 / JCM 2505 / CCUG 7422 / NBRC 12200 / NCIMB 9375 / NCTC 10341 / NRRL NRS-1264 / Gibson 46)).